A 61-amino-acid chain; its full sequence is Small ribosomal subunit protein uS14 (61 aa).

Zn(2+) is bound by residues Cys24, Cys27, Cys40, and Cys43.

Belongs to the universal ribosomal protein uS14 family. Zinc-binding uS14 subfamily. In terms of assembly, part of the 30S ribosomal subunit. Contacts proteins S3 and S10. Requires Zn(2+) as cofactor.

Functionally, binds 16S rRNA, required for the assembly of 30S particles and may also be responsible for determining the conformation of the 16S rRNA at the A site. This chain is Small ribosomal subunit protein uS14, found in Bacillus anthracis (strain A0248).